The sequence spans 61 residues: Large ribosomal subunit protein eL24 (61 aa).

Zn(2+) contacts are provided by cysteine 7, cysteine 10, cysteine 33, and cysteine 37. The C4-type zinc finger occupies 7-37 (CSFCGHEIPPGTGLMYVRNDGTMLWFCSSKC).

Belongs to the eukaryotic ribosomal protein eL24 family. Part of the 50S ribosomal subunit. Forms a cluster with proteins L3 and L14. Requires Zn(2+) as cofactor.

Its function is as follows. Binds to the 23S rRNA. This Saccharolobus islandicus (strain M.16.27) (Sulfolobus islandicus) protein is Large ribosomal subunit protein eL24.